Reading from the N-terminus, the 706-residue chain is Polycomb protein SCMH1 (706 aa).

MBT repeat units follow at residues 28-126 and 134-235; these read FTWD…LQPP and SSWP…LQPP. 2 disordered regions span residues 233–350 and 576–595; these read QPPG…TVPS and GSDR…RDPS. Basic residues-rich tracts occupy residues 272–283 and 304–319; these read RGRKPGKKRGRT and FPKK…RKPR. Residues 329-340 are compositionally biased toward low complexity; the sequence is PTTSTPEPDTST. Residues 576-591 are compositionally biased toward basic and acidic residues; it reads GSDRHLESRDPPRLSG. The SAM domain occupies 597–662; it reads WTVEDVMQFV…SFHIDRLKQV (66 aa).

This sequence belongs to the SCM family. As to quaternary structure, associates with a PRC1-like complex. Interacts with the SAM domain of PHC1 via its SAM domain in vitro. In terms of tissue distribution, most abundant in testis. Moderate levels detected in heart, brain, lung, liver, skeletal muscle and kidney and lower levels in spleen.

It localises to the nucleus. Associates with Polycomb group (PcG) multiprotein complexes; the complex class is required to maintain the transcriptionally repressive state of some genes. The sequence is that of Polycomb protein SCMH1 from Mus musculus (Mouse).